A 359-amino-acid polypeptide reads, in one-letter code: Fructose-bisphosphate aldolase (359 aa).

Residue serine 61 coordinates D-glyceraldehyde 3-phosphate. Aspartate 109 serves as the catalytic Proton donor. Histidine 110, aspartate 144, glutamate 174, and histidine 226 together coordinate Zn(2+). Glycine 227 contributes to the dihydroxyacetone phosphate binding site. Histidine 265 is a binding site for Zn(2+). Dihydroxyacetone phosphate is bound by residues 266–268 (GGS) and 287–290 (NIDT).

This sequence belongs to the class II fructose-bisphosphate aldolase family. Zn(2+) serves as cofactor.

It carries out the reaction beta-D-fructose 1,6-bisphosphate = D-glyceraldehyde 3-phosphate + dihydroxyacetone phosphate. It participates in carbohydrate degradation; glycolysis; D-glyceraldehyde 3-phosphate and glycerone phosphate from D-glucose: step 4/4. Its function is as follows. Catalyzes the aldol condensation of dihydroxyacetone phosphate (DHAP or glycerone-phosphate) with glyceraldehyde 3-phosphate (G3P) to form fructose 1,6-bisphosphate (FBP) in gluconeogenesis and the reverse reaction in glycolysis. This Borreliella burgdorferi (strain ATCC 35210 / DSM 4680 / CIP 102532 / B31) (Borrelia burgdorferi) protein is Fructose-bisphosphate aldolase (fba).